A 435-amino-acid polypeptide reads, in one-letter code: Protein CHLOROPLAST IMPORT APPARATUS 2 (435 aa).

The transit peptide at 1 to 59 (MSACLSSGGGGAAAYSFELEKVKSPPPSSSTTTTRATSPSSTISESSNSPLAISTRKPR) directs the protein to the chloroplast. Disordered stretches follow at residues 21–66 (KVKS…KRPN) and 412–435 (ADQRPRMKGRFVRRPNESTPSGQR). Over residues 29–49 (SSTTTTRATSPSSTISESSNS) the composition is skewed to low complexity. Residues 56–65 (RKPRTQRKRP) show a composition bias toward basic residues. Positions 383–425 (REASVLRYKEKRRTRLFSKKIRYQVRKLNADQRPRMKGRFVRR) constitute a CCT domain.

As to expression, expressed in leaves and young flower buds.

The protein resides in the plastid. It localises to the chloroplast. The protein localises to the nucleus. Its function is as follows. Responsible for specific up-regulation of the translocon genes TOC33 and TOC75 in leaves. Involved in the general chloroplast protein import pathway regulation, including protein import and protein translation efficiencies. The sequence is that of Protein CHLOROPLAST IMPORT APPARATUS 2 (CIA2) from Arabidopsis thaliana (Mouse-ear cress).